Here is a 239-residue protein sequence, read N- to C-terminus: Putative CCR4-associated factor 1 homolog 8 (239 aa).

Positions 17, 19, 133, and 204 each coordinate a divalent metal cation.

This sequence belongs to the CAF1 family. In terms of assembly, component of the CCR4-NOT complex, at least composed of CRR4 and CAF1 proteins. A divalent metal cation serves as cofactor.

Its subcellular location is the nucleus. The protein localises to the cytoplasm. It carries out the reaction Exonucleolytic cleavage of poly(A) to 5'-AMP.. Functionally, ubiquitous transcription factor required for a diverse set of processes. It is a component of the CCR4 complex involved in the control of gene expression. The sequence is that of Putative CCR4-associated factor 1 homolog 8 (CAF1-8) from Arabidopsis thaliana (Mouse-ear cress).